Here is a 199-residue protein sequence, read N- to C-terminus: Probable nicotinate-nucleotide adenylyltransferase (199 aa).

This sequence belongs to the NadD family.

The enzyme catalyses nicotinate beta-D-ribonucleotide + ATP + H(+) = deamido-NAD(+) + diphosphate. It participates in cofactor biosynthesis; NAD(+) biosynthesis; deamido-NAD(+) from nicotinate D-ribonucleotide: step 1/1. In terms of biological role, catalyzes the reversible adenylation of nicotinate mononucleotide (NaMN) to nicotinic acid adenine dinucleotide (NaAD). The protein is Probable nicotinate-nucleotide adenylyltransferase of Roseobacter denitrificans (strain ATCC 33942 / OCh 114) (Erythrobacter sp. (strain OCh 114)).